A 547-amino-acid polypeptide reads, in one-letter code: Glucose-6-phosphate isomerase 2 (547 aa).

E351 acts as the Proton donor in catalysis. Residues H382 and K508 contribute to the active site.

The protein belongs to the GPI family.

It localises to the cytoplasm. It carries out the reaction alpha-D-glucose 6-phosphate = beta-D-fructose 6-phosphate. It participates in carbohydrate biosynthesis; gluconeogenesis. The protein operates within carbohydrate degradation; glycolysis; D-glyceraldehyde 3-phosphate and glycerone phosphate from D-glucose: step 2/4. In terms of biological role, catalyzes the reversible isomerization of glucose-6-phosphate to fructose-6-phosphate. The chain is Glucose-6-phosphate isomerase 2 from Neisseria meningitidis serogroup A / serotype 4A (strain DSM 15465 / Z2491).